Here is a 190-residue protein sequence, read N- to C-terminus: Histone H5 (190 aa).

A disordered region spans residues 1 to 29; it reads MTESLVLSPAPAKPKRVKASRRSASHPTY. The span at 13 to 24 shows a compositional bias: basic residues; the sequence is KPKRVKASRRSA. Phosphoserine is present on residues Ser23, Ser30, Ser146, and Ser167. Positions 25-98 constitute an H15 domain; that stretch reads SHPTYSEMIA…GASGSFRLAK (74 aa). The disordered stretch occupies residues 87–190; sequence GVGASGSFRL…SGARKSPKKK (104 aa). A compositionally biased stretch (basic residues) spans 104–190; it reads RSPGKKKKAV…SGARKSPKKK (87 aa).

This sequence belongs to the histone H1/H5 family. In terms of tissue distribution, erythroid cells.

It is found in the nucleus. The protein resides in the chromosome. Its function is as follows. Histone H5 performs the same function as H1, being necessary for the condensation of nucleosome chains into higher order structures, and replaces histone H1 in certain cells. The protein is Histone H5 of Gallus gallus (Chicken).